The following is a 333-amino-acid chain: Fructose-1,6-bisphosphatase class 1 1 (333 aa).

The Mg(2+) site is built by Glu81, Asp100, Leu102, and Asp103. Residues 103–106 and Asn191 each bind substrate; that span reads DGSS. Mg(2+) is bound at residue Glu263.

Belongs to the FBPase class 1 family. As to quaternary structure, homotetramer. The cofactor is Mg(2+).

It is found in the cytoplasm. The catalysed reaction is beta-D-fructose 1,6-bisphosphate + H2O = beta-D-fructose 6-phosphate + phosphate. It participates in carbohydrate biosynthesis; Calvin cycle. This Cereibacter sphaeroides (strain ATCC 17025 / ATH 2.4.3) (Rhodobacter sphaeroides) protein is Fructose-1,6-bisphosphatase class 1 1.